Here is a 400-residue protein sequence, read N- to C-terminus: Calsequestrin-2 (400 aa).

Positions 1-19 (MKRTHLFIVGVYVLSSCRA) are cleaved as a signal peptide. Phosphotyrosine is present on Tyr-282. Asn-335 carries N-linked (GlcNAc...) asparagine glycosylation. Residues 365–400 (VLSGKINTEDDDDEDDDDDNSDEEDNDDSDDDDDDE) are disordered. A compositionally biased stretch (acidic residues) spans 373-400 (EDDDDEDDDDDNSDEEDNDDSDDDDDDE).

This sequence belongs to the calsequestrin family. As to quaternary structure, monomer, homodimer and homooligomer. Mostly monomeric in the absence of calcium. Forms higher oligomers in a calcium-dependent manner. Dimers associate to form tetramers, that then form linear homomer chains. Interacts with ASPH and TRDN. Phosphorylation in the C-terminus, probably by CK2, moderately increases calcium buffering capacity. Post-translationally, N-glycosylated.

The protein localises to the sarcoplasmic reticulum lumen. Functionally, calsequestrin is a high-capacity, moderate affinity, calcium-binding protein and thus acts as an internal calcium store in muscle. Calcium ions are bound by clusters of acidic residues at the protein surface, especially at the interface between subunits. Can bind around 60 Ca(2+) ions. Regulates the release of lumenal Ca(2+) via the calcium release channel RYR2; this plays an important role in triggering muscle contraction. Plays a role in excitation-contraction coupling in the heart and in regulating the rate of heart beats. The sequence is that of Calsequestrin-2 (CASQ2) from Pongo abelii (Sumatran orangutan).